The primary structure comprises 354 residues: Transcription activator of gluconeogenesis ERT1-1 (354 aa).

Residues 1 to 29 are disordered; that stretch reads MSFYPILRGPAKQESPPPPPAPKKRRKTA. Residues 32–60 constitute a DNA-binding region (zn(2)-C6 fungal-type); sequence CLHCQKAHLTCDEGRPCARCIKKNMGDQC. Disordered regions lie at residues 71–111 and 128–169; these read LVGL…FGSS and DTSS…QGSP. The segment covering 81-98 has biased composition (low complexity); the sequence is QATQQKQQQQQQQQQAVQ. Over residues 159-169 the composition is skewed to polar residues; sequence SQTAGTPQGSP.

This sequence belongs to the ERT1/acuK family.

It is found in the nucleus. Functionally, transcription factor which regulates nonfermentable carbon utilization. Activator of gluconeogenetic genes. This is Transcription activator of gluconeogenesis ERT1-1 (ERT1-1) from Yarrowia lipolytica (strain CLIB 122 / E 150) (Yeast).